Consider the following 322-residue polypeptide: Phosphatidylglycerol--prolipoprotein diacylglyceryl transferase (322 aa).

4 consecutive transmembrane segments (helical) span residues 21-41 (PLPI…AIWL), 50-70 (GGNP…GIIG), 98-118 (NGGL…WAYF), and 123-143 (IPLA…QAIG). A 1,2-diacyl-sn-glycero-3-phospho-(1'-sn-glycerol) is bound at residue Arg-144. 2 helical membrane-spanning segments follow: residues 191-211 (VHPT…LLIW) and 254-274 (INTL…LRLG). The tract at residues 283–322 (VDPAYHAAQAERDDTETAGLDATTGTVPGDSPETTGKKRK) is disordered.

This sequence belongs to the Lgt family.

It localises to the cell membrane. The enzyme catalyses L-cysteinyl-[prolipoprotein] + a 1,2-diacyl-sn-glycero-3-phospho-(1'-sn-glycerol) = an S-1,2-diacyl-sn-glyceryl-L-cysteinyl-[prolipoprotein] + sn-glycerol 1-phosphate + H(+). Its pathway is protein modification; lipoprotein biosynthesis (diacylglyceryl transfer). In terms of biological role, catalyzes the transfer of the diacylglyceryl group from phosphatidylglycerol to the sulfhydryl group of the N-terminal cysteine of a prolipoprotein, the first step in the formation of mature lipoproteins. The sequence is that of Phosphatidylglycerol--prolipoprotein diacylglyceryl transferase from Corynebacterium efficiens (strain DSM 44549 / YS-314 / AJ 12310 / JCM 11189 / NBRC 100395).